The sequence spans 563 residues: Arginine--tRNA ligase (563 aa).

The 'HIGH' region motif lies at 121-131 (PNIAKPFSIGH).

Belongs to the class-I aminoacyl-tRNA synthetase family. In terms of assembly, monomer.

The protein resides in the cytoplasm. It catalyses the reaction tRNA(Arg) + L-arginine + ATP = L-arginyl-tRNA(Arg) + AMP + diphosphate. This Streptococcus pneumoniae (strain ATCC BAA-255 / R6) protein is Arginine--tRNA ligase.